Reading from the N-terminus, the 2493-residue chain is Polyprotein P1234 (2493 aa).

Residues 28 to 259 (EAKQVTDNDH…EKRDLLRSWH (232 aa)) form the Alphavirus-like MT domain. The interval 244–263 (GSTIYHEKRDLLRSWHLPSV) is nsP1 membrane-binding. Cys-419 carries S-palmitoyl cysteine; by host lipidation. A (+)RNA virus helicase ATP-binding domain is found at 690–841 (ELVDPPFHEF…HEICTQVFHK (152 aa)). An a ribonucleoside 5'-triphosphate-binding site is contributed by 721-728 (GVPGSGKS). The 149-residue stretch at 842–990 (SISRRCTKSV…IEEWQAEHDA (149 aa)) folds into the (+)RNA virus helicase C-terminal domain. The Peptidase C9 domain occupies 1003–1322 (DVFQNKANVC…STLTNIYTGS (320 aa)). The nucleolus localization signal stretch occupies residues 1004 to 1023 (VFQNKANVCWAKALVPVLKT). The active-site For cysteine protease nsP2 activity is Cys-1012. Residues 1056–1065 (VRFFGLDLDS) carry the Nuclear export signal motif. The active-site For cysteine protease nsP2 activity is His-1081. A Nuclear localization signal motif is present at residues 1179–1183 (PGKKV). In terms of domain architecture, Macro spans 1330-1489 (APSYHVVRGD…TLKEAVARRE (160 aa)). 6 residues coordinate ADP-D-ribose: Asp-1339, Asn-1353, Gly-1361, Gly-1441, Ile-1442, and Phe-1443. 4 residues coordinate Zn(2+): Cys-1596, Cys-1598, Cys-1621, and Cys-1639. Disordered regions lie at residues 1664 to 1684 (PVEETPESPAENQSTEGTPEQ) and 1790 to 1826 (APRTVFRNPPHPAPRTRTPPLAHSRASSRTSLVSTPP). Over residues 1814-1823 (RASSRTSLVS) the composition is skewed to polar residues. 2 consecutive repeat copies span residues 1818–1839 (RTSLVSTPPGVNRVITREELEA) and 1852–1873 (RTSLVSNPPGVNRVITREEFEA). The tract at residues 1818-1873 (RTSLVSTPPGVNRVITREELEALTPSRAPSRSASRTSLVSNPPGVNRVITREEFEA) is 2 X 21 AA approximate repeats, binding to host FXR family members. The region spanning 2250-2365 (DCVLETDIAS…KGVKSDKLMA (116 aa)) is the RdRp catalytic domain.

As to quaternary structure, interacts with non-structural protein 3. Interacts with RNA-directed RNA polymerase nsP4. Interacts with protease nsP2. interacts with itself. Interacts with mRNA-capping enzyme nsP1. Interacts with host DDX1. Interacts with host DDX3. Interacts (via C-terminus) with host FXR1; this interaction inhibits the formation of host stress granules on viral mRNAs and the nsp3-FXR1 complexes bind viral RNAs and probably orchestrate the assembly of viral replication complexes. Interacts (via C-terminus) with host FXR2; this interaction inhibits the formation of host stress granules on viral mRNAs and the nsp3-FXR2 complexes bind viral RNAs and probably orchestrate the assembly of viral replication complexes. Interacts (via C-terminus) with host FMR1; this interaction inhibits the formation of host stress granules on viral mRNAs and the nsp3-FMR1 complexes bind viral RNAs and probably orchestrate the assembly of viral replication complexes. In terms of assembly, interacts with mRNA-capping enzyme nsP1. Interacts with protease nsP2. interacts with itself. As to quaternary structure, interacts with RNA-directed RNA polymerase nsP4. Interacts with mRNA-capping enzyme nsP1. Interacts with KPNA1/karyopherin-alpha1; this interaction probably allows the active transport of protease nsP2 into the host nucleus. It depends on Mg(2+) as a cofactor. The cofactor is Mn(2+). In terms of processing, specific enzymatic cleavages in vivo yield mature proteins. The processing of the polyprotein is temporally regulated. In early stages (1.7 hpi), P1234 is first cleaved in trans through its nsP2 protease activity, releasing P123' and nsP4, which associate to form the early replication complex. At the same time, P1234 is also cut at the nsP1/nsP2 site early in infection but with lower efficiency. After replication of the viral minus-strand RNAs (4 hpi), the polyproteins are cut at the nsP1/nsP2 and nsP2/nsP3 sites very efficiently, preventing accumulation of P123' and P1234 and allowing the formation of the late replication complex. NsP3'/nsP4 site is not cleaved anymore and P34 is produced rather than nsP4. Specific enzymatic cleavages in vivo yield mature proteins. The processing of the polyprotein is temporally regulated. In early stages (1.7 hpi), P123 is cleaved at the nsP1/nsP2 site with low efficiency. After replication of the viral minus-strand RNAs (4 hpi), the polyproteins are cut at the nsP1/nsP2 and nsP2/nsP3 sites very efficiently, preventing accumulation of P123 and allowing the formation of the late replication complex. Post-translationally, specific enzymatic cleavages in vivo yield mature proteins. The processing of the polyprotein is temporally regulated. In early stages (1.7 hpi), P123' is cleaved at the nsP1/nsP2 site with low efficiency. After replication of the viral minus-strand RNAs (4 hpi), the polyproteins are cut at the nsP1/nsP2 and nsP2/nsP3 sites very efficiently, preventing accumulation of P123' and allowing the formation of the late replication complex. In terms of processing, palmitoylated by host palmitoyltransferases ZDHHC2 and ZDHHC19. Phosphorylated by host on serines and threonines. Post-translationally, ubiquitinated; targets the protein for rapid degradation via the ubiquitin system. Nsp4 is present in extremely low quantities due to low frequency of translation through the amber stop-codon and the degradation by the ubiquitin pathway.

It localises to the host cytoplasmic vesicle membrane. The protein resides in the host cell membrane. The protein localises to the host cell projection. It is found in the host filopodium. Its subcellular location is the host nucleus. It localises to the host cytoplasm. It carries out the reaction GTP + S-adenosyl-L-methionine = N(7)-methyl-GTP + S-adenosyl-L-homocysteine. The enzyme catalyses N(7)-methyl-GTP + L-histidyl-[protein] = N(tele)-(N(7)-methylguanosine 5'-phospho)-L-histidyl-[protein] + diphosphate. The catalysed reaction is N(tele)-(N(7)-methylguanosine 5'-phospho)-L-histidyl-[protein] + a 5'-end diphospho-(purine-ribonucleoside) in mRNA + H(+) = a 5'-end (N(7)-methyl 5'-triphosphoguanosine)-(purine-ribonucleoside) in mRNA + L-histidyl-[protein]. It catalyses the reaction a 5'-end triphospho-ribonucleoside in mRNA + H2O = a 5'-end diphospho-ribonucleoside in mRNA + phosphate + H(+). It carries out the reaction a ribonucleoside 5'-triphosphate + H2O = a ribonucleoside 5'-diphosphate + phosphate + H(+). The enzyme catalyses ATP + H2O = ADP + phosphate + H(+). The catalysed reaction is RNA(n) + a ribonucleoside 5'-triphosphate = RNA(n+1) + diphosphate. It catalyses the reaction 4-O-(ADP-D-ribosyl)-L-aspartyl-[protein] + H2O = L-aspartyl-[protein] + ADP-D-ribose + H(+). It carries out the reaction 5-O-(ADP-D-ribosyl)-L-glutamyl-[protein] + H2O = L-glutamyl-[protein] + ADP-D-ribose + H(+). The enzyme catalyses RNA(n) + ATP = RNA(n)-3'-adenine ribonucleotide + diphosphate. The catalysed reaction is ADP-alpha-D-ribose 1''-phosphate + H2O = ADP-D-ribose + phosphate. With respect to regulation, inhibited by sinefungin. Functionally, inactive precursor of the viral replicase, which is activated by cleavages carried out by the viral protease nsP2. In terms of biological role, the early replication complex formed by the polyprotein P123 and nsP4 synthesizes the minus-strand RNAs (antigenome). Polyprotein P123 is a short-lived polyprotein that accumulates during early stage of infection. As soon P123 is cleaved into mature proteins, the plus-strand RNAs synthesis begins. Its function is as follows. The early replication complex formed by the polyprotein P123' and nsP4 synthesizes minus-strand RNAs (antigenome). Polyprotein P123' is a short-lived polyprotein that accumulates during early stage of infection. As soon P123' is cleaved into mature proteins, the plus-strand RNAs synthesis begins. Cytoplasmic capping enzyme that catalyzes two virus-specific reactions: methyltransferase and nsP1 guanylyltransferase. mRNA-capping is necessary since all viral RNAs are synthesized in the cytoplasm, and host capping enzymes are restricted to the nucleus. The enzymatic reaction involves a covalent link between 7-methyl-GMP and nsP1, whereas eukaryotic capping enzymes form a covalent complex only with GMP. NsP1 capping consists in the following reactions: GTP is first methylated into 7-methyl-GMP and then is covalently linked to nsP1 to form the m7GMp-nsP1 complex from which 7-methyl-GMP complex is transferred to the mRNA to create the cap structure. NsP1 is also needed for the initiation of the minus-strand RNAs synthesis. Probably serves as a membrane anchor for the replication complex composed of nsP1-nsP4. Nsp1 is needed for the initiation of the minus-strand RNAs synthesis. Palmitoylated nsP1 is remodeling host cell cytoskeleton, and induces filopodium-like structure formation at the surface of the host cell. Functionally, multifunctional protein whose N-terminus is part of the RNA polymerase complex and displays NTPase, RNA triphosphatase and helicase activities. NTPase and RNA triphosphatase are involved in viral RNA capping and helicase keeps a check on the dsRNA replication intermediates. The C-terminus harbors a protease that specifically cleaves the polyproteins and releases the mature proteins. Required for the shutoff of minus-strand RNAs synthesis. Inhibits host translation to ensure maximal viral gene expression and evade host immune response. In terms of biological role, seems to be essential for minus-strand RNAs and subgenomic 26S mRNAs synthesis. Displays mono-ADP-ribosylhydrolase activity. ADP-ribosylation is a post-translational modification that controls various processes of the host cell and the virus probably needs to revert it for optimal viral replication. Binds proteins of FXR family and sequesters them into the viral RNA replication complexes thereby inhibiting the formation of host stress granules on viral mRNAs. The nsp3-FXR complexes bind viral RNAs and probably orchestrate the assembly of viral replication complexes, thanks to the ability of FXR family members to self-assemble and bind DNA. Its function is as follows. Seems to be essential for minus-strand RNAs and subgenomic 26S mRNAs synthesis. Displays mono-ADP-ribosylhydrolase activity. ADP-ribosylation is a post-translational modification that controls various processes of the host cell and the virus probably needs to revert it for optimal viral replication. Binds proteins of FXR family and sequesters them into the viral RNA replication complexes thereby inhibiting the formation of host stress granules on viral mRNAs. The nsp3'-FXR complexes bind viral RNAs and probably orchestrate the assembly of viral replication complexes, thanks to the ability of FXR family members to self-assemble and bind DNA. RNA dependent RNA polymerase. Replicates genomic and antigenomic RNA by recognizing replications specific signals. The early replication complex formed by the polyprotein P123 and nsP4 synthesizes minus-strand RNAs. The late replication complex composed of fully processed nsP1-nsP4 is responsible for the production of genomic and subgenomic plus-strand RNAs. In Bos taurus (Bovine), this protein is Polyprotein P1234.